We begin with the raw amino-acid sequence, 182 residues long: Translation initiation factor IF-3 (182 aa).

Residues 1-22 (MPLGDCNISTPDNKQNRKNQEI) form a disordered region.

This sequence belongs to the IF-3 family. In terms of assembly, monomer.

It localises to the cytoplasm. Its function is as follows. IF-3 binds to the 30S ribosomal subunit and shifts the equilibrium between 70S ribosomes and their 50S and 30S subunits in favor of the free subunits, thus enhancing the availability of 30S subunits on which protein synthesis initiation begins. This Xanthomonas axonopodis pv. citri (strain 306) protein is Translation initiation factor IF-3.